A 209-amino-acid chain; its full sequence is MERKVFSKDGKEIGTINLDDRVFNIEISHGSIYNAIKNELSNLRVGTSSTKTRSEVRGSSKKPWKQKGTGRARVGTKRNPIWIGGGIALGPKPRDYSYRLPKKVKRLAFKSVLSLRAADENNFKVVENFNIESGKTKDLALIIKNFASFNGKVVILLGNDDQMIKRAGKNIRDLKILSFNKLRVVDLFYAKNLIALESAVNKLNEFYVK.

The segment at 46–71 (GTSSTKTRSEVRGSSKKPWKQKGTGR) is disordered. A compositionally biased stretch (basic residues) spans 59–71 (SSKKPWKQKGTGR).

The protein belongs to the universal ribosomal protein uL4 family. As to quaternary structure, part of the 50S ribosomal subunit.

Its function is as follows. One of the primary rRNA binding proteins, this protein initially binds near the 5'-end of the 23S rRNA. It is important during the early stages of 50S assembly. It makes multiple contacts with different domains of the 23S rRNA in the assembled 50S subunit and ribosome. Forms part of the polypeptide exit tunnel. This is Large ribosomal subunit protein uL4 from Borrelia garinii subsp. bavariensis (strain ATCC BAA-2496 / DSM 23469 / PBi) (Borreliella bavariensis).